Reading from the N-terminus, the 198-residue chain is Recombination protein RecR (198 aa).

The C4-type zinc-finger motif lies at 56–71; it reads CDTCGNVDTQNPCGIC. Residues 79–174 form the Toprim domain; the sequence is KSICVVEDVA…RITQLAHGLP (96 aa).

The protein belongs to the RecR family.

Its function is as follows. May play a role in DNA repair. It seems to be involved in an RecBC-independent recombinational process of DNA repair. It may act with RecF and RecO. This chain is Recombination protein RecR, found in Erythrobacter litoralis (strain HTCC2594).